Consider the following 301-residue polypeptide: Small ribosomal subunit protein uS2 (301 aa).

This sequence belongs to the universal ribosomal protein uS2 family. As to quaternary structure, component of the small ribosomal subunit. Mature ribosomes consist of a small (40S) and a large (60S) subunit. The 40S subunit contains about 33 different proteins and 1 molecule of RNA (18S). The 60S subunit contains about 49 different proteins and 3 molecules of RNA (28S, 5.8S and 5S). Interacts with ribosomal protein S21.

The protein resides in the cytoplasm. In terms of biological role, required for the assembly and/or stability of the 40S ribosomal subunit. Required for the processing of the 20S rRNA-precursor to mature 18S rRNA in a late step of the maturation of 40S ribosomal subunits. The polypeptide is Small ribosomal subunit protein uS2 (Brugia malayi (Filarial nematode worm)).